Reading from the N-terminus, the 449-residue chain is uncharacterized protein (449 aa).

The next 13 helical transmembrane spans lie at 1–21, 26–46, 51–71, 97–117, 137–157, 178–198, 223–243, 244–264, 285–305, 310–330, 340–360, 377–397, and 425–445; these read MVAN…ILLI, IHLT…HVIT, IDYI…MVLV, LLML…PNAT, FVPI…LTLV, FKLS…TPFL, VLMA…IGES, LPVP…ALLL, LIFF…GVTA, LLAV…VFTV, IPLV…IGFA, VLPL…GTLV, and GLPV…WLMF.

This sequence belongs to the CitM (TC 2.A.11) transporter family.

The protein localises to the cell membrane. This is an uncharacterized protein from Synechocystis sp. (strain ATCC 27184 / PCC 6803 / Kazusa).